The following is a 144-amino-acid chain: L-fucose mutarotase (144 aa).

H22 functions as the Proton donor in the catalytic mechanism. Substrate-binding positions include D30, R109, and 131-133; that span reads YGN.

The protein belongs to the RbsD / FucU family. FucU mutarotase subfamily. As to quaternary structure, homodecamer.

It is found in the cytoplasm. The enzyme catalyses alpha-L-fucose = beta-L-fucose. It functions in the pathway carbohydrate metabolism; L-fucose metabolism. Its function is as follows. Involved in the anomeric conversion of L-fucose. The polypeptide is L-fucose mutarotase (Haemophilus influenzae (strain PittEE)).